The primary structure comprises 385 residues: A-type ATP synthase subunit C (385 aa).

The protein belongs to the V-ATPase V0D/AC39 subunit family. Has multiple subunits with at least A(3), B(3), C, D, E, F, H, I and proteolipid K(x).

The protein resides in the cell membrane. Functionally, component of the A-type ATP synthase that produces ATP from ADP in the presence of a proton gradient across the membrane. In Methanosphaera stadtmanae (strain ATCC 43021 / DSM 3091 / JCM 11832 / MCB-3), this protein is A-type ATP synthase subunit C.